A 380-amino-acid polypeptide reads, in one-letter code: Bifunctional enzyme IspD/IspF (380 aa).

The 2-C-methyl-D-erythritol 4-phosphate cytidylyltransferase stretch occupies residues 1–224; sequence MTIPATYAAI…ERILGDAMDI (224 aa). The segment at 225 to 380 is 2-C-methyl-D-erythritol 2,4-cyclodiphosphate synthase; the sequence is RLGNGFDVHA…SIATATLVKG (156 aa). 2 residues coordinate a divalent metal cation: Asp231 and His233. Residues 231-233 and 257-258 contribute to the 4-CDP-2-C-methyl-D-erythritol 2-phosphate site; these read DVH and HS. Position 265 (His265) interacts with a divalent metal cation. 4-CDP-2-C-methyl-D-erythritol 2-phosphate contacts are provided by residues 279 to 281, 355 to 358, Phe362, and Arg365; these read DIG and TTSE.

This sequence in the N-terminal section; belongs to the IspD/TarI cytidylyltransferase family. IspD subfamily. It in the C-terminal section; belongs to the IspF family. A divalent metal cation serves as cofactor.

It catalyses the reaction 2-C-methyl-D-erythritol 4-phosphate + CTP + H(+) = 4-CDP-2-C-methyl-D-erythritol + diphosphate. The enzyme catalyses 4-CDP-2-C-methyl-D-erythritol 2-phosphate = 2-C-methyl-D-erythritol 2,4-cyclic diphosphate + CMP. It participates in isoprenoid biosynthesis; isopentenyl diphosphate biosynthesis via DXP pathway; isopentenyl diphosphate from 1-deoxy-D-xylulose 5-phosphate: step 2/6. Its pathway is isoprenoid biosynthesis; isopentenyl diphosphate biosynthesis via DXP pathway; isopentenyl diphosphate from 1-deoxy-D-xylulose 5-phosphate: step 4/6. Functionally, bifunctional enzyme that catalyzes the formation of 4-diphosphocytidyl-2-C-methyl-D-erythritol from CTP and 2-C-methyl-D-erythritol 4-phosphate (MEP) (IspD), and catalyzes the conversion of 4-diphosphocytidyl-2-C-methyl-D-erythritol 2-phosphate (CDP-ME2P) to 2-C-methyl-D-erythritol 2,4-cyclodiphosphate (ME-CPP) with a corresponding release of cytidine 5-monophosphate (CMP) (IspF). The polypeptide is Bifunctional enzyme IspD/IspF (Paracoccus denitrificans (strain Pd 1222)).